The sequence spans 142 residues: SLSAKDKANVKAIWGKILPKSDEIGEQALSRMLVVYPQTKAYFSHWASVAPGSAPVKKHGITIMNQIDDCVGHMDDLFGFLTKLSELHATKLRVDPTNFKILAHNLIVVIAAYFPAEFTPEIHLSVDKFLQQLALALAEKYR.

Position 1 is an N-acetylserine (S1). In terms of domain architecture, Globin spans 1 to 142; sequence SLSAKDKANV…LALALAEKYR (142 aa). H59 contributes to the O2 binding site. H88 serves as a coordination point for heme b.

The protein belongs to the globin family. As to quaternary structure, heterotetramer of two alpha chains and two beta chains. In terms of tissue distribution, red blood cells.

In terms of biological role, involved in oxygen transport from gills to the various peripheral tissues. The polypeptide is Hemoglobin subunit alpha-4 (hba4) (Oncorhynchus mykiss (Rainbow trout)).